An 89-amino-acid chain; its full sequence is MSITAERKAEVIQGNANKAGDTGSPEVQVAILSERIANLTAHFKTHTKDNHSRRGLLKLVSTRRSLLDYVKKKDEARYKALLEKHNIRR.

Over residues 1-10 (MSITAERKAE) the composition is skewed to basic and acidic residues. The interval 1–24 (MSITAERKAEVIQGNANKAGDTGS) is disordered.

The protein belongs to the universal ribosomal protein uS15 family. In terms of assembly, part of the 30S ribosomal subunit. Forms a bridge to the 50S subunit in the 70S ribosome, contacting the 23S rRNA.

Its function is as follows. One of the primary rRNA binding proteins, it binds directly to 16S rRNA where it helps nucleate assembly of the platform of the 30S subunit by binding and bridging several RNA helices of the 16S rRNA. Functionally, forms an intersubunit bridge (bridge B4) with the 23S rRNA of the 50S subunit in the ribosome. The protein is Small ribosomal subunit protein uS15 of Rhodopseudomonas palustris (strain HaA2).